Reading from the N-terminus, the 1915-residue chain is Ankyrin repeat domain-containing protein 36A (1915 aa).

ANK repeat units follow at residues 31–60 (YHLK…DANK), 64–93 (KERT…ELNL), 97–126 (EDRT…NPNI), 130–159 (FGRT…NIEE), 163–192 (CEYQ…NVNA), and 196–225 (LGRS…DVLS). Disordered stretches follow at residues 261–331 (PINS…DEQK), 470–619 (ATGQ…QKQS), 639–663 (MGGG…DKTD), 676–1203 (LQCG…KATS), and 1285–1304 (KDVQ…SEGE). Composition is skewed to polar residues over residues 262 to 272 (INSNPVSSQKQ) and 297 to 306 (KSGTVSSQKQ). A compositionally biased stretch (low complexity) spans 505–521 (SLTSSEESSERPPLSTL). 2 stretches are compositionally biased toward basic and acidic residues: residues 551 to 562 (PAEKATSDDKDS) and 585 to 596 (PAEKATSDEKDS). 2 stretches are compositionally biased toward polar residues: residues 597–619 (VSNI…QKQS) and 645–657 (GTVS…ASKA). 7 stretches are compositionally biased toward basic and acidic residues: residues 806 to 815 (RENKDGEKSR), 874 to 883 (RENKDGEKSR), 931 to 951 (SDEK…EISR), 976 to 985 (RENKDGEKSR), 1044 to 1053 (RENKDGEKSR), 1100 to 1121 (TSDE…EKSR), and 1134 to 1152 (ICDK…KDEQ). Residues 1175–1196 (VSNIPTEIKDGQQSGTVSSQKQ) are compositionally biased toward polar residues. Coiled-coil stretches lie at residues 1383–1466 (IKLK…TEEQ), 1504–1531 (KEDL…IKNQ), 1573–1614 (LAAL…ARCD), and 1727–1814 (NMLL…KRDD). Positions 1489–1508 (KTGGNNSNQVSETDEKEDLL) are disordered.

It belongs to the ANKRD36 family.

The chain is Ankyrin repeat domain-containing protein 36A (ANKRD36) from Homo sapiens (Human).